The sequence spans 1313 residues: Mitogen-activated protein kinase kinase kinase 15 (1313 aa).

Residues 1 to 58 (MESGGGNAPAGALGAASESPQCPPPPGVEGAAGPAEPDGAAEGAAGGSGEGESGGGPR) form a disordered region. The span at 28–43 (VEGAAGPAEPDGAAEG) shows a compositional bias: low complexity. The segment covering 44–57 (AAGGSGEGESGGGP) has biased composition (gly residues). The Protein kinase domain occupies 652 to 908 (NGERVVLGKG…TAELLREGFL (257 aa)). ATP is bound by residues 658–666 (LGKGTYGIV) and Lys-681. The Proton acceptor role is filled by Asp-773. A disordered region spans residues 939 to 958 (EPMATSSSEHGSVSPDSDAQ). Over residues 942-955 (ATSSSEHGSVSPDS) the composition is skewed to polar residues. Ser-994 bears the Phosphoserine mark. A coiled-coil region spans residues 1179-1225 (QLGELRQETNRLLEHLVEKEREYQNLLRQTLEQKTQELYHLQLKLKS).

The protein belongs to the protein kinase superfamily. STE Ser/Thr protein kinase family. MAP kinase kinase kinase subfamily. It depends on Mg(2+) as a cofactor. As to expression, isoform 2 and isoform 3 are widely expressed. Isoform 2 highest levels are observed in fetal brain, and isoform 3 highest levels in pancreas, peripheral blood leukocytes, fetal brain and spleen.

It catalyses the reaction L-seryl-[protein] + ATP = O-phospho-L-seryl-[protein] + ADP + H(+). It carries out the reaction L-threonyl-[protein] + ATP = O-phospho-L-threonyl-[protein] + ADP + H(+). Contains an N-terminal autoinhibitory domain. Activated by phosphorylation at Thr-812, inhibited by phosphorylation at Ser-924 and Ser-994. In terms of biological role, serine/threonine kinase which acts as a component of the MAP kinase signal transduction pathway. Once activated, acts as an upstream activator of the p38 MAPK signal transduction cascade through the phosphorylation and activation of several MAP kinase kinases. May function in a signal transduction pathway that is activated by various cell stresses and leads to apoptosis. Involved in phosphorylation of WNK4 in response to osmotic stress or hypotonic low-chloride stimulation via the p38 MAPK signal transduction cascade. This Homo sapiens (Human) protein is Mitogen-activated protein kinase kinase kinase 15 (MAP3K15).